A 590-amino-acid polypeptide reads, in one-letter code: Guanylate-binding protein 5 (590 aa).

Residues 1 to 306 (MAPEIHMPEP…LTYVDAINSG (306 aa)) form an NLRP3-binding region. Residues 1 to 310 (MAPEIHMPEP…DAINSGALPS (310 aa)) are GTPase domain (Globular). A GB1/RHD3-type G domain is found at 35 to 277 (TQPVVVVAIV…FCSHIFTQSK (243 aa)). GTP contacts are provided by residues 45-52 (GLYRTGKS), 67-69 (VGS), 182-183 (RD), and L246. A required for tetramerization, but not for dimerization region spans residues 529-590 (QIALEKARVA…RRHHHDCVIS (62 aa)). C587 is modified (cysteine methyl ester). The S-geranylgeranyl cysteine moiety is linked to residue C587. A propeptide spans 588–590 (VIS) (removed in mature form).

This sequence belongs to the TRAFAC class dynamin-like GTPase superfamily. GB1/RHD3 GTPase family. GB1 subfamily. In terms of assembly, homodimer; homodimerizes upon GTP-binding, forming a close face-to-face dimer. Heterodimer with other family members, including GBP1, GBP2, GBP3 and GBP4. May also form tetramers (dimer of dimers) in the presence of GTP. Interacts with NLRP3, possibly in its tetrameric form, and promotes PYCARD/ASC polymerization. Post-translationally, isoprenylation is required for proper subcellular location. Low expression, if any, in many tissues in the absence of stimulation.

Its subcellular location is the cytoplasmic vesicle membrane. The protein localises to the golgi apparatus membrane. The protein resides in the cytoplasm. It catalyses the reaction GTP + H2O = GDP + phosphate + H(+). Interferon (IFN)-inducible GTPase that plays important roles in innate immunity against a diverse range of bacterial, viral and protozoan pathogens. Hydrolyzes GTP, but in contrast to other family members, does not produce GMP. Following infection, recruited to the pathogen-containing vacuoles or vacuole-escaped bacteria and acts as a positive regulator of inflammasome assembly by promoting the release of inflammasome ligands from bacteria. Acts by promoting lysis of pathogen-containing vacuoles, releasing pathogens into the cytosol. Following pathogen release in the cytosol, promotes recruitment of proteins that mediate bacterial cytolysis, such as Gm12250/Irgb10: this liberates ligands that are detected by inflammasomes, such as lipopolysaccharide (LPS) that activates the non-canonical CASP4/CASP11 inflammasome or double-stranded DNA (dsDNA) that activates the AIM2 inflammasome. As an activator of NLRP3 inflammasome assembly: promotes selective NLRP3 inflammasome assembly in response to microbial and soluble, but not crystalline, agents. Independently of its GTPase activity, acts as an inhibitor of various viruses infectivity by inhibiting FURIN-mediated maturation of viral envelope proteins. This is Guanylate-binding protein 5 from Mus musculus (Mouse).